We begin with the raw amino-acid sequence, 95 residues long: Signal recognition particle 19 kDa protein (95 aa).

This sequence belongs to the SRP19 family. In terms of assembly, part of the signal recognition particle protein translocation system, which is composed of SRP and FtsY. Archaeal SRP consists of a 7S RNA molecule of 300 nucleotides and two protein subunits: SRP54 and SRP19.

It localises to the cytoplasm. In terms of biological role, involved in targeting and insertion of nascent membrane proteins into the cytoplasmic membrane. Binds directly to 7S RNA and mediates binding of the 54 kDa subunit of the SRP. The protein is Signal recognition particle 19 kDa protein of Pyrobaculum islandicum (strain DSM 4184 / JCM 9189 / GEO3).